The sequence spans 347 residues: Mitochondrial glycine transporter (347 aa).

3 Solcar repeats span residues 18-102 (SKPT…LRTA), 138-222 (LSHT…SKRS), and 247-331 (STAS…LIMW). A run of 6 helical transmembrane segments spans residues 24–49 (FAAG…TRVQ), 77–103 (GTLP…RTAV), 144–169 (LITG…VRYE), 197–220 (GFGA…EQSK), 251–277 (INFI…KTRV), and 306–324 (GLGL…AWTV).

The protein belongs to the mitochondrial carrier (TC 2.A.29) family. SLC25A38 subfamily.

It is found in the mitochondrion inner membrane. It catalyses the reaction glycine(in) = glycine(out). In terms of biological role, mitochondrial glycine transporter that imports glycine into the mitochondrial matrix. Plays an important role in providing glycine for the first enzymatic step in heme biosynthesis, the condensation of glycine with succinyl-CoA to produce 5-aminolevulinate (ALA) in the mitochondrial matrix. The sequence is that of Mitochondrial glycine transporter from Coccidioides immitis (strain RS) (Valley fever fungus).